The sequence spans 98 residues: Feather keratin 4 (98 aa).

N-acetylserine is present on Ser2.

The protein belongs to the avian keratin family. In terms of assembly, the avian keratins (F-ker, S-ker, C-ker and B-ker) are a complex mixture of very similar polypeptides.

This chain is Feather keratin 4, found in Gallus gallus (Chicken).